A 273-amino-acid chain; its full sequence is Pantothenate synthetase (273 aa).

27–34 (MGALHQGH) contributes to the ATP binding site. Residue His-34 is the Proton donor of the active site. Residue Gln-58 participates in (R)-pantoate binding. Beta-alanine is bound at residue Gln-58. An ATP-binding site is contributed by 144–147 (GKKD). (R)-pantoate is bound at residue Gln-150. ATP contacts are provided by residues Val-173 and 181 to 184 (LSSR).

It belongs to the pantothenate synthetase family. As to quaternary structure, homodimer.

It localises to the cytoplasm. It catalyses the reaction (R)-pantoate + beta-alanine + ATP = (R)-pantothenate + AMP + diphosphate + H(+). Its pathway is cofactor biosynthesis; (R)-pantothenate biosynthesis; (R)-pantothenate from (R)-pantoate and beta-alanine: step 1/1. Functionally, catalyzes the condensation of pantoate with beta-alanine in an ATP-dependent reaction via a pantoyl-adenylate intermediate. The protein is Pantothenate synthetase of Nitratiruptor sp. (strain SB155-2).